A 1065-amino-acid polypeptide reads, in one-letter code: RNA2 polyprotein (1065 aa).

Interacts with the large capsid protein. Interacts with the movement protein (via C-terminus). In terms of assembly, interacts with the small capsid protein. Homomultimer; assembles as pentons. As to quaternary structure, interacts (via C-terminus) with the small capsid protein. In terms of processing, specific enzymatic cleavages by picornain 3C-like protease in vivo yield mature proteins.

The protein resides in the host endoplasmic reticulum. Its subcellular location is the host cell junction. It localises to the host plasmodesma. The protein localises to the virion. Acts as a suppressor of post-transcriptional gene silencing (PTGS), a mechanism of plant viral defense that limits the accumulation of viral RNAs. Binds ssRNA. Functionally, transports the viral genome to neighboring plant cells directly through plasmosdesmata, without any budding. The movement protein allows efficient cell to cell propagation, by bypassing the host cell wall barrier. Acts by forming a tubular structure at the host plasmodesmata, enlarging it enough to allow free passage of virion capsids. Binds to GTP and to single-stranded RNA and single-stranded DNA in a non-sequence-specific manner. Also acts as a suppressor of post-transcriptional gene silencing (PTGS), a mechanism of plant viral defense that limits the accumulation of viral RNAs. Its function is as follows. Together with the small capsid protein, forms an icosahedral capsid (T=3) enclosing the viral positive strand RNA genome, with a diameter of approximately 300 Angstroms. The large capsid protein interacts with the viral RNA. Also acts as a suppressor of post-transcriptional gene silencing (PTGS), a mechanism of plant viral defense that limits the accumulation of viral RNAs. Binds ssRNA. In terms of biological role, together with the large capsid protein, forms an icosahedral capsid (T=3) enclosing the viral positive strand RNA genome, with a diameter of approximately 300 Angstroms. The capsid is formed from 60 copies each of the large and the small capsid protein. The small capsid protein forms the turrets at the fivefold axes of the viral particle. The protein is RNA2 polyprotein of Broad bean wilt virus 2 (BBWV-2).